Here is a 387-residue protein sequence, read N- to C-terminus: Involucrin (387 aa).

2 disordered regions span residues 1-319 (MSQQ…VHLG) and 347-387 (VCIP…LKQE). Residues 28 to 37 (NTQQDQMKQP) show a composition bias toward polar residues. Over residues 62-71 (QVPEQECEPQ) the composition is skewed to low complexity. Basic and acidic residues-rich tracts occupy residues 85–96 (KQQEPQEQEVHP), 104–115 (QEQEAHLGKKQE), 147–179 (QEVH…KQLQ), and 231–245 (QLEK…ELHL).

The protein belongs to the involucrin family. Directly or indirectly cross-linked to cornifelin (CNFN). In terms of processing, substrate of transglutaminase. Specific glutamines or lysines are cross-linked to keratins, desmoplakin and to inter involucrin molecules. Keratinocytes of epidermis and other stratified squamous epithelia.

The protein resides in the cytoplasm. In terms of biological role, part of the insoluble cornified cell envelope (CE) of stratified squamous epithelia. The protein is Involucrin (IVL) of Cephalopachus bancanus (Western tarsier).